Consider the following 664-residue polypeptide: ATP-dependent zinc metalloprotease FtsH (664 aa).

Residues 1–9 (MKQNIKRNW) are Cytoplasmic-facing. Residues 10–30 (IWILIVMIVIGIILYFSIRNL) form a helical membrane-spanning segment. The Extracellular portion of the chain corresponds to 31-136 (FSTKVAEWSI…KSVATPQPNP (106 aa)). The helical transmembrane segment at 137–157 (FLGILISSVPVLILIFVMVWI) threads the bilayer. Topologically, residues 158 to 664 (YRSQVKMMNG…SLIEKTSKKE (507 aa)) are cytoplasmic. 229–236 (GPPGTGKT) provides a ligand contact to ATP. Residue His-451 coordinates Zn(2+). Residue Glu-452 is part of the active site. His-455 and Asp-529 together coordinate Zn(2+). A compositionally biased stretch (basic and acidic residues) spans 639–649 (IEEKDLSKNSE). A disordered region spans residues 639–664 (IEEKDLSKNSEDNNLDSLIEKTSKKE).

It in the central section; belongs to the AAA ATPase family. This sequence in the C-terminal section; belongs to the peptidase M41 family. As to quaternary structure, homohexamer. Requires Zn(2+) as cofactor.

The protein resides in the cell membrane. Acts as a processive, ATP-dependent zinc metallopeptidase for both cytoplasmic and membrane proteins. Plays a role in the quality control of integral membrane proteins. This chain is ATP-dependent zinc metalloprotease FtsH, found in Mycoplasmopsis synoviae (strain 53) (Mycoplasma synoviae).